We begin with the raw amino-acid sequence, 793 residues long: RNA-binding protein spenito (793 aa).

2 disordered regions span residues 1–93 (MSSH…PPAE) and 243–296 (HHDY…KKDK). Residues 25–42 (SRSPGPASRSSLSRNSRS) show a composition bias toward low complexity. The span at 257–268 (RGGHPHHLHGHA) shows a compositional bias: basic residues. Residues 285-296 (APYEKPESKKDK) are compositionally biased toward basic and acidic residues. RRM domains are found at residues 314 to 391 (RTLF…YGKV) and 395 to 469 (TRMW…FAEL). Positions 507-623 (YAPRGGYSPY…RNDALASAST (117 aa)) are disordered. A compositionally biased stretch (basic residues) spans 526 to 536 (GGYRGRGRGMY). Basic and acidic residues predominate over residues 566–593 (DEWRRPPGESYDRGARSSSREPGVERSR). The SPOC domain maps to 624 to 791 (VPDVARKCST…HLVIVVVRGG (168 aa)).

The protein belongs to the RRM Spen family. In terms of assembly, component of the WMM complex, a N6-methyltransferase complex composed of a catalytic subcomplex, named MAC, and of an associated subcomplex, named MACOM. The MAC subcomplex is composed of Ime4/Mettl3 and Mettl14. The MACOM subcomplex is composed of fl(2)d, Flacc/Xio, Hakai, vir, and, in some cases of nito. Interacts with Sxl. Interacts with Hipk; leading to phosphorylation. Post-translationally, phosphorylated by Hipk at Ser-23, Ser-25 and/or Ser-27; the precise position if phosphorylation sites is unknown. In terms of tissue distribution, widely expressed. Shows some enrichment in the central nervous system.

The protein localises to the nucleus. Its function is as follows. RNA-binding protein that acts as an associated component of the WMM complex, a complex that mediates N6-methyladenosine (m6A) methylation of mRNAs. M6a modification plays a role in the efficiency of mRNA splicing and is required for sex determination. In the WMM complex, may act by binding target RNAs and recruiting the WMM complex. Required for sex determination and dosage compensation via Sxl alternative splicing: m6A methylation acts as a key regulator of Sxl pre-mRNA and promotes female-specific alternative splicing of Sxl, which determines female physiognomy. M6A methylation is also required for neuronal functions. Acts as a positive regulator of canonical Wg signaling during wing disk and eye development. The chain is RNA-binding protein spenito from Drosophila melanogaster (Fruit fly).